The sequence spans 162 residues: NADH-quinone oxidoreductase subunit I (162 aa).

4Fe-4S ferredoxin-type domains lie at 52–82 (LRRY…IEAG) and 93–122 (TRYD…EGPN). Residues cysteine 62, cysteine 65, cysteine 68, cysteine 72, cysteine 102, cysteine 105, cysteine 108, and cysteine 112 each coordinate [4Fe-4S] cluster.

Belongs to the complex I 23 kDa subunit family. As to quaternary structure, NDH-1 is composed of 14 different subunits. Subunits NuoA, H, J, K, L, M, N constitute the membrane sector of the complex. Requires [4Fe-4S] cluster as cofactor.

The protein localises to the cell inner membrane. The catalysed reaction is a quinone + NADH + 5 H(+)(in) = a quinol + NAD(+) + 4 H(+)(out). NDH-1 shuttles electrons from NADH, via FMN and iron-sulfur (Fe-S) centers, to quinones in the respiratory chain. The immediate electron acceptor for the enzyme in this species is believed to be ubiquinone. Couples the redox reaction to proton translocation (for every two electrons transferred, four hydrogen ions are translocated across the cytoplasmic membrane), and thus conserves the redox energy in a proton gradient. This Methylobacterium radiotolerans (strain ATCC 27329 / DSM 1819 / JCM 2831 / NBRC 15690 / NCIMB 10815 / 0-1) protein is NADH-quinone oxidoreductase subunit I.